The sequence spans 571 residues: Hemagglutinin-neuraminidase (571 aa).

The Intravirion segment spans residues 1–25; that stretch reads MEDYSNLSLKSIPKRTCRIIFRTAT. A helical membrane pass occupies residues 26 to 46; sequence ILGICTLIVLCSSILHEIIHL. Topologically, residues 47–571 are virion surface; the sequence is DVSSGLMDSD…IIPFLRELIP (525 aa). 3 disulfides stabilise this stretch: C166–C190, C180–C241, and C232–C245. Residues 228–233 form an important for neuraminidase activity region; sequence NRKSCS. The interval 228 to 233 is involved in neuraminidase activity; the sequence is NRKSCS. 4 N-linked (GlcNAc...) asparagine; by host glycosylation sites follow: N272, N284, N335, and N341. 3 disulfides stabilise this stretch: C338/C459, C370/C380, and C453/C463. N386 is a glycosylation site (N-linked (GlcNAc...) asparagine; by host). Positions 393 to 398 are sialic receptor-binding site; it reads GAEGRL. N-linked (GlcNAc...) asparagine; by host glycosylation is found at N454, N498, N501, N517, and N522. Cysteines 535 and 546 form a disulfide.

It belongs to the paramyxoviruses hemagglutinin-neuraminidase family. In terms of assembly, homotetramer; composed of disulfide-linked homodimers. Interacts with F protein trimer.

It is found in the virion membrane. The protein resides in the host cell membrane. It carries out the reaction Hydrolysis of alpha-(2-&gt;3)-, alpha-(2-&gt;6)-, alpha-(2-&gt;8)- glycosidic linkages of terminal sialic acid residues in oligosaccharides, glycoproteins, glycolipids, colominic acid and synthetic substrates.. Attaches the virus to sialic acid-containing cell receptors and thereby initiating infection. Binding of HN protein to the receptor induces a conformational change that allows the F protein to trigger virion/cell membranes fusion. Its function is as follows. Neuraminidase activity ensures the efficient spread of the virus by dissociating the mature virions from the neuraminic acid containing glycoproteins. The protein is Hemagglutinin-neuraminidase (HN) of Human parainfluenza 2 virus (strain Toshiba) (HPIV-2).